A 142-amino-acid chain; its full sequence is Large ribosomal subunit protein uL11 (142 aa).

The protein belongs to the universal ribosomal protein uL11 family. Part of the ribosomal stalk of the 50S ribosomal subunit. Interacts with L10 and the large rRNA to form the base of the stalk. L10 forms an elongated spine to which L12 dimers bind in a sequential fashion forming a multimeric L10(L12)X complex. Post-translationally, one or more lysine residues are methylated.

In terms of biological role, forms part of the ribosomal stalk which helps the ribosome interact with GTP-bound translation factors. The chain is Large ribosomal subunit protein uL11 from Serratia proteamaculans (strain 568).